The sequence spans 154 residues: Myoglobin (154 aa).

Residues 2-148 (GLSDAEWQLV…FRNDIAAKYK (147 aa)) form the Globin domain. At Ser-4 the chain carries Phosphoserine. His-65 contacts nitrite. O2 is bound at residue His-65. A Phosphothreonine modification is found at Thr-68. His-94 contributes to the heme b binding site.

Belongs to the globin family. As to quaternary structure, monomeric.

The protein resides in the cytoplasm. It localises to the sarcoplasm. It catalyses the reaction Fe(III)-heme b-[protein] + nitric oxide + H2O = Fe(II)-heme b-[protein] + nitrite + 2 H(+). The catalysed reaction is H2O2 + AH2 = A + 2 H2O. In terms of biological role, monomeric heme protein which primary function is to store oxygen and facilitate its diffusion within muscle tissues. Reversibly binds oxygen through a pentacoordinated heme iron and enables its timely and efficient release as needed during periods of heightened demand. Depending on the oxidative conditions of tissues and cells, and in addition to its ability to bind oxygen, it also has a nitrite reductase activity whereby it regulates the production of bioactive nitric oxide. Under stress conditions, like hypoxia and anoxia, it also protects cells against reactive oxygen species thanks to its pseudoperoxidase activity. The sequence is that of Myoglobin (MB) from Orycteropus afer (Aardvark).